The following is a 295-amino-acid chain: ATP synthase gamma chain (295 aa).

The protein belongs to the ATPase gamma chain family. As to quaternary structure, F-type ATPases have 2 components, CF(1) - the catalytic core - and CF(0) - the membrane proton channel. CF(1) has five subunits: alpha(3), beta(3), gamma(1), delta(1), epsilon(1). CF(0) has three main subunits: a, b and c.

The protein resides in the cell membrane. Produces ATP from ADP in the presence of a proton gradient across the membrane. The gamma chain is believed to be important in regulating ATPase activity and the flow of protons through the CF(0) complex. In Caldanaerobacter subterraneus subsp. tengcongensis (strain DSM 15242 / JCM 11007 / NBRC 100824 / MB4) (Thermoanaerobacter tengcongensis), this protein is ATP synthase gamma chain.